The sequence spans 155 residues: Transcriptional repressor NrdR (155 aa).

A zinc finger lies at 3 to 34; it reads CPFCGNVDTQVKDSRPAEDHVAIRRRRFCPAC. Positions 49–139 constitute an ATP-cone domain; it reads LVVIKSSGKR…VYKNFQAADD (91 aa).

The protein belongs to the NrdR family. It depends on Zn(2+) as a cofactor.

Functionally, negatively regulates transcription of bacterial ribonucleotide reductase nrd genes and operons by binding to NrdR-boxes. In Dinoroseobacter shibae (strain DSM 16493 / NCIMB 14021 / DFL 12), this protein is Transcriptional repressor NrdR.